Reading from the N-terminus, the 240-residue chain is Uridylate kinase (240 aa).

An ATP-binding site is contributed by 12 to 15; the sequence is KLSG. Positions 20-25 are involved in allosteric activation by GTP; that stretch reads GEDGFG. G54 lines the UMP pocket. Residues G55 and R59 each coordinate ATP. UMP-binding positions include D74 and 135–142; that span reads TGNPYFST. Positions 163, 169, and 172 each coordinate ATP.

It belongs to the UMP kinase family. In terms of assembly, homohexamer.

It localises to the cytoplasm. It catalyses the reaction UMP + ATP = UDP + ADP. It functions in the pathway pyrimidine metabolism; CTP biosynthesis via de novo pathway; UDP from UMP (UMPK route): step 1/1. Allosterically activated by GTP. Probably inhibited by UTP. In terms of biological role, catalyzes the reversible phosphorylation of UMP to UDP. In Enterococcus faecalis (strain ATCC 700802 / V583), this protein is Uridylate kinase (pyrH).